The chain runs to 226 residues: Glutathione S-transferase kappa 1 (226 aa).

16-18 serves as a coordination point for glutathione; the sequence is SPY. K49 carries the post-translational modification N6-succinyllysine. N53 serves as a coordination point for glutathione. 2 positions are modified to N6-acetyllysine: K71 and K85. At K116 the chain carries N6-acetyllysine; alternate. K116 carries the post-translational modification N6-succinyllysine; alternate. K144 carries the N6-succinyllysine modification. The residue at position 158 (K158) is an N6-acetyllysine; alternate. At K158 the chain carries N6-succinyllysine; alternate. 2 positions are modified to N6-acetyllysine: K165 and K169. Glutathione contacts are provided by residues L183 and 200 to 201; that span reads SD.

This sequence belongs to the GST superfamily. Kappa family. Homodimer. As to expression, ubiquitous.

Its subcellular location is the peroxisome. It catalyses the reaction RX + glutathione = an S-substituted glutathione + a halide anion + H(+). Its function is as follows. Glutathione S-transferase that catalyzes the conjugation of glutathione to exogenous and endogenous compounds. Significant glutathione conjugating activity is found only with the model substrate, 1-chloro-2,4-dinitrobenzene (CDNB). In Homo sapiens (Human), this protein is Glutathione S-transferase kappa 1 (GSTK1).